The sequence spans 243 residues: Linker for activation of T-cells family member 2 (243 aa).

Residues M1–T5 are Extracellular-facing. A helical; Signal-anchor for type III membrane protein membrane pass occupies residues E6–V26. Residues C25 and C28 are each lipidated (S-palmitoyl cysteine). Residues R27–A243 are Cytoplasmic-facing. Position 44 is a phosphoserine (S44). Phosphotyrosine is present on Y58. Phosphoserine is present on residues S59 and S92. Phosphotyrosine is present on residues Y136, Y193, and Y233. A disordered region spans residues P174–A243.

When phosphorylated, interacts with GRB2. May also interact with SOS1, GAB1 and CBL. Phosphorylated on tyrosines following cross-linking of BCR in B-cells, FCGR1 in myeloid cells, or FCER1 in mast cells; which induces the recruitment of GRB2. In terms of processing, may be polyubiquitinated. In terms of tissue distribution, highly expressed in spleen, peripheral blood lymphocytes, and germinal centers of lymph nodes. Also expressed in placenta, lung, pancreas and small intestine. Present in B-cells, NK cells and monocytes. Absent from T-cells (at protein level).

The protein resides in the cell membrane. In terms of biological role, involved in FCER1 (high affinity immunoglobulin epsilon receptor)-mediated signaling in mast cells. May also be involved in BCR (B-cell antigen receptor)-mediated signaling in B-cells and FCGR1 (high affinity immunoglobulin gamma Fc receptor I)-mediated signaling in myeloid cells. Couples activation of these receptors and their associated kinases with distal intracellular events through the recruitment of GRB2. This chain is Linker for activation of T-cells family member 2 (LAT2), found in Homo sapiens (Human).